A 124-amino-acid polypeptide reads, in one-letter code: Protein MGF 110-4L (124 aa).

Residues 1–18 (MLVIFLGILGLLANQVLG) form the signal peptide. The N-linked (GlcNAc...) asparagine; by host glycan is linked to asparagine 64. Residues 121 to 124 (KEDL) carry the Prevents secretion from ER motif.

The protein belongs to the asfivirus MGF 110 family.

Its subcellular location is the virion. It is found in the host endoplasmic reticulum-Golgi intermediate compartment. Causes the redistribution of lumenal ER protein to an enlarged ERGIC compartment. The protein is Protein MGF 110-4L of Ornithodoros (relapsing fever ticks).